Consider the following 260-residue polypeptide: Adenosylcobinamide-GDP ribazoletransferase (260 aa).

Helical transmembrane passes span 42 to 62, 64 to 84, 117 to 137, 144 to 164, 192 to 212, 214 to 234, and 240 to 260; these read PLAG…ANAI, LPPL…TGAL, FAAL…MAII, YALL…LAFW, GLGL…VALI, ALVL…AKIG, and TLGA…VMAL.

The protein belongs to the CobS family. Mg(2+) serves as cofactor.

Its subcellular location is the cell inner membrane. The enzyme catalyses alpha-ribazole + adenosylcob(III)inamide-GDP = adenosylcob(III)alamin + GMP + H(+). It carries out the reaction alpha-ribazole 5'-phosphate + adenosylcob(III)inamide-GDP = adenosylcob(III)alamin 5'-phosphate + GMP + H(+). The protein operates within cofactor biosynthesis; adenosylcobalamin biosynthesis; adenosylcobalamin from cob(II)yrinate a,c-diamide: step 7/7. Joins adenosylcobinamide-GDP and alpha-ribazole to generate adenosylcobalamin (Ado-cobalamin). Also synthesizes adenosylcobalamin 5'-phosphate from adenosylcobinamide-GDP and alpha-ribazole 5'-phosphate. This Brucella melitensis biotype 1 (strain ATCC 23456 / CCUG 17765 / NCTC 10094 / 16M) protein is Adenosylcobinamide-GDP ribazoletransferase.